A 296-amino-acid polypeptide reads, in one-letter code: tRNA dimethylallyltransferase (296 aa).

ATP is bound at residue 11-18; it reads GPTAVGKT. 13–18 contributes to the substrate binding site; it reads TAVGKT. Residues 36–39 form an interaction with substrate tRNA region; it reads DSQQ.

The protein belongs to the IPP transferase family. In terms of assembly, monomer. It depends on Mg(2+) as a cofactor.

The catalysed reaction is adenosine(37) in tRNA + dimethylallyl diphosphate = N(6)-dimethylallyladenosine(37) in tRNA + diphosphate. Its function is as follows. Catalyzes the transfer of a dimethylallyl group onto the adenine at position 37 in tRNAs that read codons beginning with uridine, leading to the formation of N6-(dimethylallyl)adenosine (i(6)A). This is tRNA dimethylallyltransferase from Streptococcus agalactiae serotype Ia (strain ATCC 27591 / A909 / CDC SS700).